The chain runs to 451 residues: MNLEVKKIDTANARLSAKLSIENLEKRYDKIAQKIAQKVKIDGFRRGKVPLSLVKTRYQAQIEQDAQEEMIQEVLKNAFKELGIENKDLIGSPNLTKFEKKDTHFEIEADIGLKPTIVLDKIKECVPSVGVEVPNEEKIDERLKQLAKDYAKFVDTNTQRKAQNDDKLTIDFEGFIDNAPFEGGKAENFNLILGSKQMLEDFEKALLGMQAGEEKEFPLTFPSKYHAEHLAGKEAFFKVKLHQIQAREMLEINDELAKIVLANEENATLKLLKERVEGQLFLENKARLYNEELKEKLIENLDEKIVFDLPKTIIEQEMDLLFRNALYSMQAEEVKSLQESQEKAKEKRESFRNDATKSVKITFIIDALAKEEKIGVHDNEVFQTLYYEAMMTGQNPENLIEQYRKNNMLAAVKMAMIEDRVLAYLLDKNLPKEQQEILEKMRPNAQKIQAG.

The PPIase FKBP-type domain occupies 165–250; that stretch reads DDKLTIDFEG…LHQIQAREML (86 aa).

It belongs to the FKBP-type PPIase family. Tig subfamily.

The protein localises to the cytoplasm. The enzyme catalyses [protein]-peptidylproline (omega=180) = [protein]-peptidylproline (omega=0). In terms of biological role, involved in protein export. Acts as a chaperone by maintaining the newly synthesized protein in an open conformation. Functions as a peptidyl-prolyl cis-trans isomerase. The protein is Trigger factor (tig) of Helicobacter pylori (strain ATCC 700392 / 26695) (Campylobacter pylori).